Reading from the N-terminus, the 93-residue chain is Acylphosphatase (93 aa).

One can recognise an Acylphosphatase-like domain in the interval 7 to 93 (RAHVFVSGTV…EGIDGFHIRR (87 aa)). Active-site residues include Arg22 and Asn40.

This sequence belongs to the acylphosphatase family.

The catalysed reaction is an acyl phosphate + H2O = a carboxylate + phosphate + H(+). The sequence is that of Acylphosphatase (acyP) from Haloquadratum walsbyi (strain DSM 16790 / HBSQ001).